Consider the following 359-residue polypeptide: 3-dehydroquinate synthase (359 aa).

NAD(+)-binding positions include 105–109 (GVVGD), 129–130 (TT), lysine 142, lysine 151, and 169–172 (TIKT). Residues glutamate 184, histidine 247, and histidine 263 each contribute to the Zn(2+) site.

This sequence belongs to the sugar phosphate cyclases superfamily. Dehydroquinate synthase family. It depends on Co(2+) as a cofactor. Zn(2+) is required as a cofactor. The cofactor is NAD(+).

It is found in the cytoplasm. It carries out the reaction 7-phospho-2-dehydro-3-deoxy-D-arabino-heptonate = 3-dehydroquinate + phosphate. It functions in the pathway metabolic intermediate biosynthesis; chorismate biosynthesis; chorismate from D-erythrose 4-phosphate and phosphoenolpyruvate: step 2/7. Functionally, catalyzes the conversion of 3-deoxy-D-arabino-heptulosonate 7-phosphate (DAHP) to dehydroquinate (DHQ). The protein is 3-dehydroquinate synthase of Ruminiclostridium cellulolyticum (strain ATCC 35319 / DSM 5812 / JCM 6584 / H10) (Clostridium cellulolyticum).